A 745-amino-acid chain; its full sequence is uncharacterized protein (745 aa).

The region spanning 158-256 (NQVCDYIELH…HQTPKQYRGD (99 aa)) is the HTH araC/xylS-type domain. DNA-binding regions (H-T-H motif) lie at residues 175 to 196 (SELS…AESL) and 223 to 246 (ITDI…KHFT).

This is an uncharacterized protein from Staphylococcus aureus (strain MRSA252).